We begin with the raw amino-acid sequence, 492 residues long: Catalase isozyme C (492 aa).

Residue Arg62 participates in heme binding. Residue His65 is part of the active site. A heme-binding site is contributed by Arg102. Asn138 is a catalytic residue. Phe151 provides a ligand contact to heme. Tyr210 is modified (phosphotyrosine; by STRK1). Residues Cys325–Tyr348 constitute a cross-link (3-(S-cysteinyl)-tyrosine (Cys-Tyr)). Positions 344, 348, and 355 each coordinate heme. Positions Ser484–Met492 match the Peroxisome targeting signal motif.

This sequence belongs to the catalase family. Homotetramer. Interacts with GLO1 and GLO4; these interactions are disturbed by alpha-hydroxy-2-pyridinemethanesulfonic acid (HPMS) and salicylic acid (SA). Interacts with STRK1 at the plasma membrane. The cofactor is heme. Post-translationally, activated by STRK1-mediated phosphorylation at Tyr-210 upon salt and oxidative stress. Highly expressed in mature leaves. Mainly expressed in leaf blades, stems, panicles, leaf sheaths, and culms, but barely in roots.

It is found in the peroxisome. The protein localises to the glyoxysome. Its subcellular location is the cell membrane. It catalyses the reaction 2 H2O2 = O2 + 2 H2O. Strongly inhibited by beta-mercaptoethanol, sodium azide and potassium cyanide. Slightly repressed by 3-amino-1,2,4-triazole (3-AT). Activity is repressed proportionally to increased concentration of NaCl, KCl, LiCl and MgCl(2). Its function is as follows. Occurs in almost all aerobically respiring organisms and serves to protect cells from the toxic effects of hydrogen peroxide. Responsible for the redox homeostasis in leaves. Prevents nitric oxide (NO) accumulation and subsequent NO-mediated leaf cell death as well as the S-nitrosylation of specific proteins (e.g. glyceraldehyde 3-phosphate dehydrogenase and thioredoxin) by degrading H(2)O(2). Involved in photorespiration. Promotes drought stress tolerance and recovery. Involved in NO-mediated enhanced tolerance to zinc oxide nanoparticles (ZnO NPs)-induced phytotoxicity. Participates in melatonin-mediated detoxification. This Oryza sativa subsp. japonica (Rice) protein is Catalase isozyme C.